The primary structure comprises 117 residues: Large ribosomal subunit protein uL24 (117 aa).

The protein belongs to the universal ribosomal protein uL24 family. In terms of assembly, part of the 50S ribosomal subunit.

Functionally, one of two assembly initiator proteins, it binds directly to the 5'-end of the 23S rRNA, where it nucleates assembly of the 50S subunit. Its function is as follows. One of the proteins that surrounds the polypeptide exit tunnel on the outside of the subunit. This Thermosynechococcus vestitus (strain NIES-2133 / IAM M-273 / BP-1) protein is Large ribosomal subunit protein uL24.